The chain runs to 201 residues: Small ribosomal subunit protein uS4c (201 aa).

Residues 1 to 14 (MSRYRGPRFKKIRR) show a composition bias toward basic residues. A disordered region spans residues 1–44 (MSRYRGPRFKKIRRLGALPGLTSKRPRAGSDPRNQSRSGKKSQY). The S4 RNA-binding domain maps to 89-152 (MRLDNTLFRL…NSRTLVQNLL (64 aa)).

This sequence belongs to the universal ribosomal protein uS4 family. As to quaternary structure, part of the 30S ribosomal subunit. Contacts protein S5. The interaction surface between S4 and S5 is involved in control of translational fidelity.

Its subcellular location is the plastid. It localises to the chloroplast. Functionally, one of the primary rRNA binding proteins, it binds directly to 16S rRNA where it nucleates assembly of the body of the 30S subunit. Its function is as follows. With S5 and S12 plays an important role in translational accuracy. The chain is Small ribosomal subunit protein uS4c (rps4) from Draba nemorosa (Woodland whitlowgrass).